The sequence spans 602 residues: Elongation factor 4 (602 aa).

The tr-type G domain maps to 6 to 188 (RNVRNFSIIA…RITEVVPEPA (183 aa)). Residues 18-23 (DHGKST) and 135-138 (NKID) each bind GTP.

The protein belongs to the TRAFAC class translation factor GTPase superfamily. Classic translation factor GTPase family. LepA subfamily.

It is found in the cell membrane. The enzyme catalyses GTP + H2O = GDP + phosphate + H(+). Its function is as follows. Required for accurate and efficient protein synthesis under certain stress conditions. May act as a fidelity factor of the translation reaction, by catalyzing a one-codon backward translocation of tRNAs on improperly translocated ribosomes. Back-translocation proceeds from a post-translocation (POST) complex to a pre-translocation (PRE) complex, thus giving elongation factor G a second chance to translocate the tRNAs correctly. Binds to ribosomes in a GTP-dependent manner. The polypeptide is Elongation factor 4 (Oceanobacillus iheyensis (strain DSM 14371 / CIP 107618 / JCM 11309 / KCTC 3954 / HTE831)).